The sequence spans 481 residues: Aromatic amino acid aminotransferase DDB_G0272014 (481 aa).

An N6-(pyridoxal phosphate)lysine modification is found at Lys-300.

It belongs to the class-I pyridoxal-phosphate-dependent aminotransferase family. Pyridoxal 5'-phosphate serves as cofactor.

It localises to the cytoplasm. It catalyses the reaction an aromatic L-alpha-amino acid + 2-oxoglutarate = an aromatic oxo-acid + L-glutamate. Functionally, has aromatic amino acid transaminase activity. In Dictyostelium discoideum (Social amoeba), this protein is Aromatic amino acid aminotransferase DDB_G0272014.